A 106-amino-acid polypeptide reads, in one-letter code: Small ribosomal subunit protein bS18 (106 aa).

The disordered stretch occupies residues 1-41; the sequence is MAEEHSNQRSQTFNGERTNRPSRKPRGDGERRGRRQGGRRR.

The protein belongs to the bacterial ribosomal protein bS18 family. In terms of assembly, part of the 30S ribosomal subunit. Forms a tight heterodimer with protein bS6.

Its function is as follows. Binds as a heterodimer with protein bS6 to the central domain of the 16S rRNA, where it helps stabilize the platform of the 30S subunit. The protein is Small ribosomal subunit protein bS18 of Oenococcus oeni (strain ATCC BAA-331 / PSU-1).